The chain runs to 234 residues: UPF0104 membrane protein MJ1078 (234 aa).

Transmembrane regions (helical) follow at residues V32–I52, I70–V90, L123–L143, L164–I184, and V198–F218.

Belongs to the UPF0104 family.

The protein localises to the cell membrane. The sequence is that of UPF0104 membrane protein MJ1078 from Methanocaldococcus jannaschii (strain ATCC 43067 / DSM 2661 / JAL-1 / JCM 10045 / NBRC 100440) (Methanococcus jannaschii).